Here is a 387-residue protein sequence, read N- to C-terminus: Alpha-sarcoglycan (387 aa).

Positions 1-23 (MAETLFWTPLLVVLLAGLGDTEA) are cleaved as a signal peptide. The Extracellular segment spans residues 24 to 290 (QQTTLHPLVG…APDRDFLVDA (267 aa)). Residues Asn174 and Asn246 are each glycosylated (N-linked (GlcNAc...) asparagine). Residues 291–311 (LVTLLVPLLVALLLTLLLAYV) form a helical membrane-spanning segment. At 312-387 (MCCRREGRLK…AQVPLILDQH (76 aa)) the chain is on the cytoplasmic side. Residue Ser377 is modified to Phosphoserine.

It belongs to the sarcoglycan alpha/epsilon family. In terms of assembly, interacts with the syntrophin SNTA1. Cross-link to form 2 major subcomplexes: one consisting of SGCB, SGCD and SGCG and the other consisting of SGCB and SGCD. The association between SGCB and SGCG is particularly strong while SGCA is loosely associated with the other sarcoglycans. Most strongly expressed in skeletal muscle. Also expressed in cardiac muscle and, at much lower levels, in lung. In the fetus, most abundant in cardiac muscle and, at lower levels, in lung. Also detected in liver and kidney. Not expressed in brain.

It is found in the cell membrane. The protein localises to the sarcolemma. The protein resides in the cytoplasm. It localises to the cytoskeleton. Its function is as follows. Component of the sarcoglycan complex, a subcomplex of the dystrophin-glycoprotein complex which forms a link between the F-actin cytoskeleton and the extracellular matrix. The polypeptide is Alpha-sarcoglycan (SGCA) (Homo sapiens (Human)).